The primary structure comprises 376 residues: Fructose-1,6-bisphosphate aldolase/phosphatase (376 aa).

The Proton acceptor; for FBP phosphatase activity role is filled by D11. 4 residues coordinate Mg(2+): D11, H18, D49, and D50. H18 provides a ligand contact to beta-D-fructose 1,6-bisphosphate. Residue H18 coordinates dihydroxyacetone phosphate. Y87 lines the beta-D-fructose 1,6-bisphosphate pocket. Q91 is a binding site for Mg(2+). 100-101 (GN) is a binding site for beta-D-fructose 1,6-bisphosphate. D128 contributes to the Mg(2+) binding site. K129 contributes to the beta-D-fructose 1,6-bisphosphate binding site. K129 lines the dihydroxyacetone phosphate pocket. Y224 functions as the Proton donor/acceptor; for FBP aldolase activity in the catalytic mechanism. Mg(2+) contacts are provided by K227, D228, and D229. The active-site Schiff-base intermediate with DHAP; for FBP aldolase activity is the K227. Beta-D-fructose 1,6-bisphosphate is bound by residues 237-238 (QK), R261, and Y342. R261 is a binding site for dihydroxyacetone phosphate. Residues 357–376 (MVPLKDSGPAGTGRAYEDPD) are disordered.

Belongs to the FBP aldolase/phosphatase family. In terms of assembly, homooctamer; dimer of tetramers. Requires Mg(2+) as cofactor.

The catalysed reaction is beta-D-fructose 1,6-bisphosphate + H2O = beta-D-fructose 6-phosphate + phosphate. The enzyme catalyses beta-D-fructose 1,6-bisphosphate = D-glyceraldehyde 3-phosphate + dihydroxyacetone phosphate. It participates in carbohydrate biosynthesis; gluconeogenesis. Its function is as follows. Catalyzes two subsequent steps in gluconeogenesis: the aldol condensation of dihydroxyacetone phosphate (DHAP) and glyceraldehyde-3-phosphate (GA3P) to fructose-1,6-bisphosphate (FBP), and the dephosphorylation of FBP to fructose-6-phosphate (F6P). This is Fructose-1,6-bisphosphate aldolase/phosphatase from Cenarchaeum symbiosum (strain A).